The chain runs to 1408 residues: ABC transporter B family member 20 (1408 aa).

Residues 14–49 (HMQPLTPVSEVSEPPESPSPYLDPGAESGGGTGTAA) are disordered. Positions 20 to 39 (PVSEVSEPPESPSPYLDPGA) are enriched in low complexity. The helical transmembrane segment at 86–106 (VLMIVGSVAAAAHGTALIVYL) threads the bilayer. Positions 88-381 (MIVGSVAAAA…AATNFYSFDQ (294 aa)) constitute an ABC transmembrane type-1 1 domain. The N-linked (GlcNAc...) asparagine glycan is linked to Asn120. Transmembrane regions (helical) follow at residues 141 to 161 (IVYIAGGVFISGWIEVSCWIL), 214 to 233 (VGNYIHNMATFISGLVIGFV), and 238 to 260 (IALITLATGPFIVAAGGISNIFL). Asn293 carries N-linked (GlcNAc...) asparagine glycosylation. 2 helical membrane passes run 312–332 (GILISLVQGLGLGFTYGLAIC) and 353–373 (GEIIAALFAVILSGLGLNQAA). Residues 414-649 (IEFRNVYFSY…GGLYAELLKC (236 aa)) enclose the ABC transporter 1 domain. 449-456 (GRNGSGKS) is an ATP binding site. The N-linked (GlcNAc...) asparagine glycan is linked to Asn451. 2 disordered regions span residues 676-735 (SSAG…SLDC) and 752-816 (LPHL…DAQH). Polar residues predominate over residues 762 to 771 (CPQQKSNGSE). N-linked (GlcNAc...) asparagine glycosylation is present at Asn768. Residues 802-816 (DDTKANGKASKDAQH) are compositionally biased toward basic and acidic residues. An ABC transmembrane type-1 2 domain is found at 836-1124 (AVLGSLGAAI…PFGLAPYILK (289 aa)). Transmembrane regions (helical) follow at residues 841–861 (LGAAIFGSFNPLLAYVIALVV), 881–901 (LIIACMGIVTVVANFLQHFYF), 959–979 (IFIQDSFAVIVALLIGLLLGW), 983–1003 (LVALATLPILTLSAIAQKLWL), 1062–1082 (IGFAFGFSQFLLFACNALLLW), and 1103–1123 (MVFSFATFALVEPFGLAPYIL). In terms of domain architecture, ABC transporter 2 spans 1159–1396 (IELKNVDFCY…NGLYVRLMQP (238 aa)). An N-linked (GlcNAc...) asparagine glycan is attached at Asn1179. Residue 1194–1201 (GVSGSGKS) participates in ATP binding. Asn1261 and Asn1347 each carry an N-linked (GlcNAc...) asparagine glycan.

Belongs to the ABC transporter superfamily. ABCB family. Multidrug resistance exporter (TC 3.A.1.201) subfamily. As to expression, expressed in aerial tissues.

Its subcellular location is the membrane. It catalyses the reaction (indol-3-yl)acetate(in) + ATP + H2O = (indol-3-yl)acetate(out) + ADP + phosphate + H(+). Probable auxin efflux transporter that contributes, together with ABCB6 and in a FKBP42/TWD1-dependent manner, to the regulation of leaf position and morphology, internode distribution, roots development, and inflorescence organization, probably by modulating auxin repartition. The chain is ABC transporter B family member 20 from Arabidopsis thaliana (Mouse-ear cress).